A 382-amino-acid polypeptide reads, in one-letter code: Gap junction alpha-1 protein (382 aa).

At 2–23 (GDWSALGKLLDKVQAYSTAGGK) the chain is on the cytoplasmic side. Position 5 is a phosphoserine (S5). Residues 24–44 (VWLSVLFIFRILLLGTAVESA) traverse the membrane as a helical segment. Over 45 to 76 (WGDEQSAFRCNTQQPGCENVCYDKSFPISHVR) the chain is Extracellular. 2 disulfide bridges follow: C54–C192 and C187–C198. A helical transmembrane segment spans residues 77–97 (FWVLQIIFVSVPTLLYLAHVF). The Cytoplasmic portion of the chain corresponds to 98 to 155 (YVMRKEEKLNKKEEELKVAQTDGVNVEMHLKQIEIKKFKYGIEEHGKVKMRGGLLRTY). A Glycyl lysine isopeptide (Lys-Gly) (interchain with G-Cter in SUMO) cross-link involves residue K144. The chain crosses the membrane as a helical span at residues 156–176 (IISILFKSVFEVAFLLIQWYI). At 177–207 (YGFSLSAVYTCKRDPCPHQVDCFLSRPTEKT) the chain is on the extracellular side. Residues 208 to 228 (IFIIFMLVVSLVSLALNIIEL) form a helical membrane-spanning segment. Topologically, residues 229–382 (FYVFFKGVKD…SRPRPDDLEI (154 aa)) are cytoplasmic. Residue K237 forms a Glycyl lysine isopeptide (Lys-Gly) (interchain with G-Cter in SUMO) linkage. The segment at 244 to 382 (SDPYHATTGP…SRPRPDDLEI (139 aa)) is interaction with NOV. Phosphotyrosine is present on Y247. A phosphoserine mark is found at S255, S257, and S262. Residues 264–382 (KYAYFNGCSS…SRPRPDDLEI (119 aa)) form an interaction with UBQLN4 region. Position 271 is an S-nitrosocysteine (C271). Phosphothreonine is present on T275. Residues S306 and S314 each carry the phosphoserine modification. Residues 317–332 (QNRMGQAGSTISNSHA) are compositionally biased toward polar residues. Residues 317–382 (QNRMGQAGST…SRPRPDDLEI (66 aa)) are disordered. At S325 the chain carries Phosphoserine; by CK1. At T326 the chain carries Phosphothreonine. A phosphoserine; by CK1 mark is found at S328 and S330. Phosphoserine is present on residues S344 and S365. The span at 362–374 (RPSSRASSRASSR) shows a compositional bias: low complexity. S368 carries the phosphoserine; by PKC/PRKCG and PKC/PRKCD modification. Phosphoserine is present on residues S369 and S373.

Belongs to the connexin family. Alpha-type (group II) subfamily. As to quaternary structure, a connexon is composed of a hexamer of connexins. Interacts with SGSM3. Interacts with RIC1/CIP150. Interacts with CNST and CSNK1D. Interacts (via C-terminus) with TJP1. Interacts (via C-terminus) with SRC (via SH3 domain). Interacts (not ubiquitinated) with UBQLN4 (via UBA domain). Interacts with NOV. Interacts with TMEM65. Interacts with ANK3/ANKG and PKP2. Phosphorylation at Ser-325, Ser-328 and Ser-330 by CK1 modulates gap junction assembly. Phosphorylated at Ser-368 by PRKCG; phosphorylation induces disassembly of gap junction plaques and inhibition of gap junction activity. Phosphorylation at Ser-368 by PRKCD triggers its internalization into small vesicles leading to proteasome-mediated degradation. In terms of processing, sumoylated with SUMO1, SUMO2 and SUMO3, which may regulate the level of functional Cx43 gap junctions at the plasma membrane. May be desumoylated by SENP1 or SENP2. Post-translationally, S-nitrosylation at Cys-271 is enriched at the muscle endothelial gap junction in arteries, it augments channel permeability and may regulate of smooth muscle cell to endothelial cell communication. Acetylated in the developing cortex; leading to delocalization from the cell membrane.

It localises to the cell membrane. It is found in the cell junction. Its subcellular location is the gap junction. The protein resides in the endoplasmic reticulum. Its function is as follows. Gap junction protein that acts as a regulator of bladder capacity. A gap junction consists of a cluster of closely packed pairs of transmembrane channels, the connexons, through which materials of low MW diffuse from one cell to a neighboring cell. May play a critical role in the physiology of hearing by participating in the recycling of potassium to the cochlear endolymph. Negative regulator of bladder functional capacity: acts by enhancing intercellular electrical and chemical transmission, thus sensitizing bladder muscles to cholinergic neural stimuli and causing them to contract. May play a role in cell growth inhibition through the regulation of NOV expression and localization. Plays an essential role in gap junction communication in the ventricles. The polypeptide is Gap junction alpha-1 protein (GJA1) (Oryctolagus cuniculus (Rabbit)).